The following is a 294-amino-acid chain: FAD-dependent monooxygenase SAT1 (294 aa).

An FAD-binding site is contributed by Asp-108.

It belongs to the paxM FAD-dependent monooxygenase family. Requires FAD as cofactor.

It functions in the pathway mycotoxin biosynthesis. Its function is as follows. FAD-dependent monooxygenase; part of the satratoxin SC1 cluster involved in the biosynthesis of satratoxins, trichothecene mycotoxins that are associated with human food poisonings. Satratoxins are suggested to be made by products of multiple gene clusters (SC1, SC2 and SC3) that encode 21 proteins in all, including polyketide synthases, acetyltransferases, and other enzymes expected to modify the trichothecene skeleton. SC1 encodes 10 proteins, SAT1 to SAT10. The largest are SAT8, which encodes a putative polyketide synthase (PKS) with a conventional non-reducing architecture, and SAT10, a putative protein containing four ankyrin repeats and thus may be involved in protein scaffolding. The putative short-chain reductase SAT3 may assist the PKS in some capacity. SAT6 contains a secretory lipase domain and acts probably as a trichothecene esterase. SAT5 encodes a putative acetyltransferase, and so, with SAT6, may affect endogenous protection from toxicity. The probable transcription factor SAT9 may regulate the expression of the SC1 cluster. SC2 encodes proteins SAT11 to SAT16, the largest of which encodes the putative reducing PKS SAT13. SAT11 is a cytochrome P450 monooxygenase, while SAT14 and SAT16 are probable acetyltransferases. The SC2 cluster may be regulated by the transcription factor SAT15. SC3 is a small cluster that encodes 5 proteins, SAT17 to SAT21. SAT21 is a putative MFS-type transporter which may have a role in exporting secondary metabolites. The four other proteins putatively encoded in SC3 include the taurine hydroxylase-like protein SAT17, the O-methyltransferase SAT18, the acetyltransferase SAT19, and the Cys6-type zinc finger SAT20, the latter being probably involved in regulation of SC3 expression. The protein is FAD-dependent monooxygenase SAT1 of Stachybotrys chartarum (strain CBS 109288 / IBT 7711) (Toxic black mold).